We begin with the raw amino-acid sequence, 369 residues long: Anthranilate phosphoribosyltransferase (369 aa).

5-phospho-alpha-D-ribose 1-diphosphate-binding positions include Gly-99, 102-103, 109-112, 127-135, and Ser-139; these read GD, NVST, and KHGNRGVSS. An anthranilate-binding site is contributed by Gly-99. Ser-111 serves as a coordination point for Mg(2+). Anthranilate is bound at residue Asn-130. Arg-185 is an anthranilate binding site. Asp-244 and Glu-245 together coordinate Mg(2+).

The protein belongs to the anthranilate phosphoribosyltransferase family. In terms of assembly, homodimer. Mg(2+) is required as a cofactor.

It catalyses the reaction N-(5-phospho-beta-D-ribosyl)anthranilate + diphosphate = 5-phospho-alpha-D-ribose 1-diphosphate + anthranilate. It functions in the pathway amino-acid biosynthesis; L-tryptophan biosynthesis; L-tryptophan from chorismate: step 2/5. Functionally, catalyzes the transfer of the phosphoribosyl group of 5-phosphorylribose-1-pyrophosphate (PRPP) to anthranilate to yield N-(5'-phosphoribosyl)-anthranilate (PRA). This chain is Anthranilate phosphoribosyltransferase, found in Psychrobacter sp. (strain PRwf-1).